Reading from the N-terminus, the 90-residue chain is uncharacterized protein (90 aa).

Positions 1–21 (MFKFSIPLLLFIFLFFSCINS) are cleaved as a signal peptide. Residues 56 to 90 (SNEKLPERILSGSSGSCSSCSISSSNGSSSRSSKQ) are disordered. The segment covering 66-90 (SGSSGSCSSCSISSSNGSSSRSSKQ) has biased composition (low complexity). N-linked (GlcNAc...) asparagine glycosylation occurs at N81.

This is an uncharacterized protein from Dictyostelium discoideum (Social amoeba).